The chain runs to 116 residues: Beta-D-galactosidase Rv1717 (116 aa).

A Cupin type-2 domain is found at 40–107 (LSVYRPGGTA…TDRQALLLVT (68 aa)).

Its subcellular location is the secreted. The protein resides in the cell wall. The enzyme catalyses Hydrolysis of terminal non-reducing beta-D-galactose residues in beta-D-galactosides.. Its activity is regulated as follows. Beta-galactosidase activity is activated by Mg(2+) and significantly inhibited by Ca(2+), Cd(2+), Fe(2+), Ni(2+), Cu(2+) and Zn(2+). Inhibited by EDTA. Beta-D-galactopyranosidase that specifically recognizes the beta-glycosidic bonds formed with beta-D-galactopyranose (beta-D-Gal) or N-acetylgalactosamine (beta-D-GalNAc). May target the galactoside linkages in the exopolysaccharide component of the mycobacterial extracellular polymeric substance (EPS) and help dispersal of Mtb bacteria from a deteriorating biofilm. The chain is Beta-D-galactosidase Rv1717 from Mycobacterium tuberculosis (strain ATCC 25618 / H37Rv).